The primary structure comprises 176 residues: Ubiquinol-cytochrome c reductase iron-sulfur subunit (176 aa).

A helical transmembrane segment spans residues 15–36; that stretch reads FLFVATGAAAAVGGAAALWPFI. One can recognise a Rieske domain in the interval 87–174; it reads ARAVNVASLP…YQFVSDTKIQ (88 aa). [2Fe-2S] cluster contacts are provided by Cys-119, His-121, Cys-138, and His-141. The cysteines at positions 124 and 140 are disulfide-linked.

It belongs to the Rieske iron-sulfur protein family. The main subunits of complex b-c1 are: cytochrome b, cytochrome c1 and the Rieske protein. [2Fe-2S] cluster is required as a cofactor.

The protein localises to the cell membrane. The catalysed reaction is a quinol + 2 Fe(III)-[cytochrome c](out) = a quinone + 2 Fe(II)-[cytochrome c](out) + 2 H(+)(out). Functionally, component of the ubiquinol-cytochrome c reductase complex (complex III or cytochrome b-c1 complex), which is a respiratory chain that generates an electrochemical potential coupled to ATP synthesis. This is Ubiquinol-cytochrome c reductase iron-sulfur subunit (petA) from Bradyrhizobium diazoefficiens (strain JCM 10833 / BCRC 13528 / IAM 13628 / NBRC 14792 / USDA 110).